Consider the following 694-residue polypeptide: Glycine--tRNA ligase beta subunit (694 aa).

It belongs to the class-II aminoacyl-tRNA synthetase family. As to quaternary structure, tetramer of two alpha and two beta subunits.

The protein localises to the cytoplasm. The enzyme catalyses tRNA(Gly) + glycine + ATP = glycyl-tRNA(Gly) + AMP + diphosphate. The chain is Glycine--tRNA ligase beta subunit from Moorella thermoacetica (strain ATCC 39073 / JCM 9320).